Consider the following 432-residue polypeptide: 3-phosphoshikimate 1-carboxyvinyltransferase (432 aa).

3-phosphoshikimate-binding residues include Lys23, Ser24, and Arg28. A phosphoenolpyruvate-binding site is contributed by Lys23. Phosphoenolpyruvate-binding residues include Gly95 and Arg123. The 3-phosphoshikimate site is built by Ser167, Gln169, Asp317, and Lys344. Residue Gln169 coordinates phosphoenolpyruvate. Asp317 functions as the Proton acceptor in the catalytic mechanism. Residues Arg348 and Arg390 each contribute to the phosphoenolpyruvate site.

Belongs to the EPSP synthase family. In terms of assembly, monomer.

It is found in the cytoplasm. The catalysed reaction is 3-phosphoshikimate + phosphoenolpyruvate = 5-O-(1-carboxyvinyl)-3-phosphoshikimate + phosphate. It participates in metabolic intermediate biosynthesis; chorismate biosynthesis; chorismate from D-erythrose 4-phosphate and phosphoenolpyruvate: step 6/7. Its function is as follows. Catalyzes the transfer of the enolpyruvyl moiety of phosphoenolpyruvate (PEP) to the 5-hydroxyl of shikimate-3-phosphate (S3P) to produce enolpyruvyl shikimate-3-phosphate and inorganic phosphate. This Staphylococcus aureus (strain N315) protein is 3-phosphoshikimate 1-carboxyvinyltransferase.